The primary structure comprises 466 residues: NADH-quinone oxidoreductase subunit N (466 aa).

Helical transmembrane passes span 9-29, 33-53, 68-88, 100-120, 122-142, 157-177, 190-210, 232-252, 263-283, 289-309, 314-334, 359-379, 394-416, and 438-458; these read LIPL…GAIV, CGTV…MLAP, PFTR…LLLA, EEYP…ASAA, FLTL…LVAY, LLMG…LYGA, SAAG…GLAF, VVAF…LLIL, APLW…ALLQ, MLAY…LSGG, AAAF…GALA, GVVL…VGFV, APLA…RVVV, and LSLG…GPLF.

The protein belongs to the complex I subunit 2 family. NDH-1 is composed of 14 different subunits. Subunits NuoA, H, J, K, L, M, N constitute the membrane sector of the complex.

Its subcellular location is the cell inner membrane. The enzyme catalyses a quinone + NADH + 5 H(+)(in) = a quinol + NAD(+) + 4 H(+)(out). NDH-1 shuttles electrons from NADH, via FMN and iron-sulfur (Fe-S) centers, to quinones in the respiratory chain. The immediate electron acceptor for the enzyme in this species is believed to be ubiquinone. Couples the redox reaction to proton translocation (for every two electrons transferred, four hydrogen ions are translocated across the cytoplasmic membrane), and thus conserves the redox energy in a proton gradient. This chain is NADH-quinone oxidoreductase subunit N, found in Geobacter metallireducens (strain ATCC 53774 / DSM 7210 / GS-15).